Consider the following 231-residue polypeptide: Protein HHL1, chloroplastic (231 aa).

The N-terminal 39 residues, 1–39, are a transit peptide targeting the chloroplast; the sequence is MEVSMSLNALTRLPLKNTGRFEEVGLARHSLFSSRTACR. A helical membrane pass occupies residues 93-113; sequence YLWYPLSIIAGGTTAKIMVAA. Residues 206–231 are disordered; that stretch reads SFGKLSSLNPGSDEKTEETSDEKAKA. The span at 217–231 shows a compositional bias: basic and acidic residues; sequence SDEKTEETSDEKAKA.

In terms of assembly, interacts with psbB, psbC and LQY1, but not with psbA or psbD.

Its subcellular location is the plastid. The protein localises to the chloroplast thylakoid membrane. In terms of biological role, involved in photoprotection. Forms a complex with LQY1 that is involved in the repair and reassembly cycle of the PSII-LHCII supercomplex under high-light conditions. May function in guiding the release of psbC from PSII core monomers. In Arabidopsis thaliana (Mouse-ear cress), this protein is Protein HHL1, chloroplastic.